The sequence spans 338 residues: tRNA N6-adenosine threonylcarbamoyltransferase (338 aa).

His111 and His115 together coordinate Fe cation. Substrate is bound by residues 134 to 138 (LVSGG), Asp167, Gly180, and Asn272. Fe cation is bound at residue Asp300.

This sequence belongs to the KAE1 / TsaD family. Fe(2+) serves as cofactor.

The protein localises to the cytoplasm. It catalyses the reaction L-threonylcarbamoyladenylate + adenosine(37) in tRNA = N(6)-L-threonylcarbamoyladenosine(37) in tRNA + AMP + H(+). In terms of biological role, required for the formation of a threonylcarbamoyl group on adenosine at position 37 (t(6)A37) in tRNAs that read codons beginning with adenine. Is involved in the transfer of the threonylcarbamoyl moiety of threonylcarbamoyl-AMP (TC-AMP) to the N6 group of A37, together with TsaE and TsaB. TsaD likely plays a direct catalytic role in this reaction. The sequence is that of tRNA N6-adenosine threonylcarbamoyltransferase from Shewanella halifaxensis (strain HAW-EB4).